Reading from the N-terminus, the 431-residue chain is Ribosomal RNA small subunit methyltransferase B (431 aa).

S-adenosyl-L-methionine is bound by residues 254–260, aspartate 277, aspartate 303, and aspartate 322; that span reads CAAPGGK. The active-site Nucleophile is the cysteine 375. A disordered region spans residues 398–417; sequence LHATGTPASPGQQNLPGPEE. Polar residues predominate over residues 403-412; it reads TPASPGQQNL.

This sequence belongs to the class I-like SAM-binding methyltransferase superfamily. RsmB/NOP family.

The protein resides in the cytoplasm. It carries out the reaction cytidine(967) in 16S rRNA + S-adenosyl-L-methionine = 5-methylcytidine(967) in 16S rRNA + S-adenosyl-L-homocysteine + H(+). Its function is as follows. Specifically methylates the cytosine at position 967 (m5C967) of 16S rRNA. The polypeptide is Ribosomal RNA small subunit methyltransferase B (Klebsiella pneumoniae (strain 342)).